We begin with the raw amino-acid sequence, 399 residues long: Serpin-Z1B (399 aa).

Positions 344–368 (GTEAAASTAIKMVPQQARPPSVMDF) are RCL.

The protein belongs to the serpin family.

Inhibits chymotrypsin and cathepsin G in vitro. The sequence is that of Serpin-Z1B from Triticum aestivum (Wheat).